Reading from the N-terminus, the 516-residue chain is 2-isopropylmalate synthase (516 aa).

Positions 8 to 270 constitute a Pyruvate carboxyltransferase domain; that stretch reads IYIFDTTLRD…YTGIKTESIY (263 aa). 4 residues coordinate Mn(2+): Asp17, His205, His207, and Asn241. The tract at residues 394-516 is regulatory domain; it reads KLIYLNVVSG…DAGKIKSEYE (123 aa).

The protein belongs to the alpha-IPM synthase/homocitrate synthase family. LeuA type 1 subfamily. In terms of assembly, homodimer. Requires Mn(2+) as cofactor.

Its subcellular location is the cytoplasm. It catalyses the reaction 3-methyl-2-oxobutanoate + acetyl-CoA + H2O = (2S)-2-isopropylmalate + CoA + H(+). Its pathway is amino-acid biosynthesis; L-leucine biosynthesis; L-leucine from 3-methyl-2-oxobutanoate: step 1/4. Its function is as follows. Catalyzes the condensation of the acetyl group of acetyl-CoA with 3-methyl-2-oxobutanoate (2-ketoisovalerate) to form 3-carboxy-3-hydroxy-4-methylpentanoate (2-isopropylmalate). The protein is 2-isopropylmalate synthase of Syntrophus aciditrophicus (strain SB).